A 1218-amino-acid polypeptide reads, in one-letter code: Protein jagged-1 (1218 aa).

The first 33 residues, 1-33, serve as a signal peptide directing secretion; the sequence is MRSPRTRGRSGRPLSLLLALLCALRAKVCGASG. Residues 34–1067 are Extracellular-facing; the sequence is QFELEILSMQ…QRRPLKNRTD (1034 aa). N143 is a glycosylation site (N-linked (GlcNAc...) asparagine). A DSL domain is found at 185–229; that stretch reads VTCDDYYYGFGCNKFCRPRDDFFGHYACDQNGNKTCMEGWMGPEC. 2 disulfide bridges follow: C187–C196 and C200–C212. The important for interaction with NOTCH1 stretch occupies residues 199–207; that stretch reads FCRPRDDFF. N217 carries an N-linked (GlcNAc...) asparagine glycan. Disulfide bonds link C220/C229, C234/C245, C238/C251, C253/C262, C265/C276, C271/C282, C284/C293, C300/C312, C306/C322, C324/C333, C340/C351, C345/C360, C362/C371, C378/C389, C383/C398, C400/C409, C416/C427, C421/C436, C438/C447, C454/C464, C458/C473, C475/C484, C491/C502, C496/C511, C513/C522, C529/C540, C534/C549, C551/C560, C578/C605, C599/C615, C617/C626, C633/C644, C638/C653, C655/C664, C671/C682, C676/C691, C693/C702, C709/C720, C714/C729, and C731/C740. The region spanning 230–263 is the EGF-like 1 domain; it reads NRAICRQGCSPKHGSCKLPGDCRCQYGWQGLYCD. An EGF-like 2; atypical domain is found at 264 to 294; sequence KCIPHPGCVHGICNEPWQCLCETNWGGQLCD. EGF-like domains are found at residues 296-334 and 336-372; these read DLNY…PNCE and AEHA…PTCS. In terms of domain architecture, EGF-like 5; calcium-binding spans 374 to 410; sequence NIDDCSPNNCSHGGTCQDLVNGFKCVCPPQWTGKTCQ. N382 carries N-linked (GlcNAc...) asparagine glycosylation. The EGF-like 6; calcium-binding domain maps to 412-448; it reads DANECEAKPCVNAKSCKNLIASYYCDCLPGWMGQNCD. The region spanning 450–485 is the EGF-like 7; calcium-binding domain; that stretch reads NINDCLGQCQNDASCRDLVNGYRCICPPGYAGDHCE. An EGF-like 8; calcium-binding domain is found at 487-523; the sequence is DIDECASNPCLNGGHCQNEINRFQCLCPTGFSGNLCQ. 2 EGF-like domains span residues 525–561 and 586–627; these read DIDY…KNCS and DTPE…TYCH. N559 carries an N-linked (GlcNAc...) asparagine glycan. Residues 629–665 form the EGF-like 11; calcium-binding domain; sequence NINDCESNPCRNGGTCIDGVNSYKCICSDGWEGAYCE. Residues 667–703 enclose the EGF-like 12; calcium-binding domain; that stretch reads NINDCSQNPCHNGGTCRDLVNDFYCDCKNGWKGKTCH. EGF-like domains lie at 705 to 741 and 744 to 780; these read RDSQ…TTCN and RNSS…PICA. The N-linked (GlcNAc...) asparagine glycan is linked to N745. 9 disulfides stabilise this stretch: C748–C759, C753–C768, C770–C779, C786–C797, C791–C806, C808–C817, C824–C835, C829–C844, and C846–C855. The 37-residue stretch at 782–818 folds into the EGF-like 15; calcium-binding domain; the sequence is NTNDCSPHPCYNSGTCVDGDNWYRCECAPGFAGPDCR. The EGF-like 16; calcium-binding domain occupies 820–856; it reads NINECQSSPCAFGATCVDEINGYRCVCPPGHSGAKCQ. N960, N991, N1045, and N1064 each carry an N-linked (GlcNAc...) asparagine glycan. A helical transmembrane segment spans residues 1068–1093; it reads FLVPLLSSVLTVAWICCLVTAFYWCL. Over 1094-1218 the chain is Cytoplasmic; it reads RKRRKPGSHT…QSLNRMEYIV (125 aa). A disordered region spans residues 1152 to 1218; sequence HNSEVEEDDM…QSLNRMEYIV (67 aa). The span at 1189–1199 shows a compositional bias: polar residues; sequence TPTKHPNWTNK.

As to quaternary structure, interacts with NOTCH2 and NOTCH3. Interacts with NOTCH1 (in the presence of calcium ions). Widely expressed in adult and fetal tissues. In cervix epithelium expressed in undifferentiated subcolumnar reserve cells and squamous metaplasia. Expression is up-regulated in cervical squamous cell carcinoma. Expressed in bone marrow cell line HS-27a which supports the long-term maintenance of immature progenitor cells.

It localises to the membrane. It is found in the cell membrane. Functionally, ligand for multiple Notch receptors and involved in the mediation of Notch signaling. May be involved in cell-fate decisions during hematopoiesis. Seems to be involved in early and late stages of mammalian cardiovascular development. Inhibits myoblast differentiation. Enhances fibroblast growth factor-induced angiogenesis (in vitro). This Homo sapiens (Human) protein is Protein jagged-1 (JAG1).